The following is a 141-amino-acid chain: Large ribosomal subunit protein uL16 (141 aa).

Belongs to the universal ribosomal protein uL16 family. In terms of assembly, part of the 50S ribosomal subunit.

Binds 23S rRNA and is also seen to make contacts with the A and possibly P site tRNAs. The polypeptide is Large ribosomal subunit protein uL16 (Campylobacter jejuni subsp. jejuni serotype O:6 (strain 81116 / NCTC 11828)).